We begin with the raw amino-acid sequence, 576 residues long: Proline--tRNA ligase (576 aa).

The protein belongs to the class-II aminoacyl-tRNA synthetase family. ProS type 1 subfamily. Homodimer.

It is found in the cytoplasm. The catalysed reaction is tRNA(Pro) + L-proline + ATP = L-prolyl-tRNA(Pro) + AMP + diphosphate. Its function is as follows. Catalyzes the attachment of proline to tRNA(Pro) in a two-step reaction: proline is first activated by ATP to form Pro-AMP and then transferred to the acceptor end of tRNA(Pro). As ProRS can inadvertently accommodate and process non-cognate amino acids such as alanine and cysteine, to avoid such errors it has two additional distinct editing activities against alanine. One activity is designated as 'pretransfer' editing and involves the tRNA(Pro)-independent hydrolysis of activated Ala-AMP. The other activity is designated 'posttransfer' editing and involves deacylation of mischarged Ala-tRNA(Pro). The misacylated Cys-tRNA(Pro) is not edited by ProRS. The polypeptide is Proline--tRNA ligase (Bordetella bronchiseptica (strain ATCC BAA-588 / NCTC 13252 / RB50) (Alcaligenes bronchisepticus)).